Reading from the N-terminus, the 1937-residue chain is Collagen-like protein 7 (1937 aa).

Residues N6 and N21 are each glycosylated (N-linked (GlcNAc...) asparagine; by host). Disordered regions lie at residues 88 to 248 (CKGN…KGDK), 294 to 531 (NLKG…PDLG), 583 to 643 (LKGD…NQGV), and 670 to 1144 (IKGD…DTAT). Collagen-like domains follow at residues 102–161 (GPKG…KGEK), 168–227 (GEKG…KGDI), 297–356 (GEKG…KGEK), 363–422 (GDKG…IGEK), and 453–512 (GDKG…KGDK). Positions 296-514 (KGEKGDKGNK…DKGDKGDKGD (219 aa)) are enriched in basic and acidic residues. An N-linked (GlcNAc...) asparagine; by host glycan is attached at N515. 3 stretches are compositionally biased toward basic and acidic residues: residues 584 to 605 (KGDK…KGDK), 614 to 625 (KGEKGDKGDKGD), and 670 to 899 (IKGD…KGDK). Collagen-like domains lie at 672–731 (GDKG…KGDK), 735–854 (GNKG…KGNI), 867–926 (GLKG…KGDK), 936–995 (GIKG…KGDK), and 1023–1142 (GSKG…KGDT). The N-linked (GlcNAc...) asparagine; by host glycan is linked to N902. A compositionally biased stretch (basic and acidic residues) spans 907 to 1141 (YKGDKGDKGS…DKGDKGDKGD (235 aa)). N-linked (GlcNAc...) asparagine; by host glycans are attached at residues N1178, N1192, N1212, N1217, N1245, N1246, N1255, N1317, N1422, N1427, N1432, N1443, N1452, N1477, N1494, N1506, N1513, N1533, N1598, N1619, N1620, N1632, N1641, N1663, N1664, N1672, N1682, N1683, N1732, N1735, N1746, N1756, N1784, N1842, and N1934.

May be hydroxylated on lysine by the viral-encoded procollagen-lysine,2-oxoglutarate 5-dioxygenase.

It is found in the virion. Its function is as follows. May participate in the formation of a layer of cross-linked glycosylated fibrils at the viral surface thus giving it a hairy-like appearance. This chain is Collagen-like protein 7, found in Acanthamoeba polyphaga mimivirus (APMV).